An 842-amino-acid polypeptide reads, in one-letter code: MLFWAAHLLLSLQLAVAYCWAFSCQRTESSPGFSLPGDFLLAGLFSLHADCLQVRHRPLVTSCDRSDSFNGHGYHLFQAMRFTVEEINNSTALLPNITLGYELYDVCSESSNVYATLRVLAQQGTGHLEMQRDLRNHSSKVVALIGPDNTDHAVTTAALLSPFLMPLVSYEASSVILSGKRKFPSFLRTIPSDKYQVEVIVRLLQSFGWVWISLVGSYGDYGQLGVQALEELATPRGICVAFKNVVPLSAQAGDPRMQRMMLRLARARTTVVVVFSNRHLDGVFFRSVVLANLTGKVWIASEDWAISTNIPNVSGIQGIGTVLGVAIQQRQVPGLKEFEESYVQAVMGAPRTCPEGSWCGTNQLCRECHAFTTWNMPELGAFSMSAAYNVYEAVYAVAHGLHQLLGCTSGTCARGPVHPWQLLQQIYKVNFLLHKKTVAFDDKGDPLGYYDIIAWDWNGPEWTFEVIGSASLSPVHLDINKTKIQWHGKNNQVPVSVCTRDCLEGHHRLVMGSHHCCFECMPCEAGTFLNTSELHTCQPCGTEEWAPEGSSACFSRTVEFLGWHEPISLVLLAANTLLLLLLIGTAGLFAWRLHTPVVRSAGGRLCFLMLGSLVAGSCSLYSFFGKPTVPACLLRQPLFSLGFAIFLSCLTIRSFQLVIIFKFSTKVPTFYHTWAQNHGAGIFVIVSSTVHLFLCLTWLAMWTPRPTREYQRFPHLVILECTEVNSVGFLVAFAHNILLSISTFVCSYLGKELPENYNEAKCVTFSLLLHFVSWIAFFTMSSIYQGSYLPAVNVLAGLATLSGGFSGYFLPKCYVILCRPELNNTEHFQASIQDYTRRCGTT.

Residues Met-1–Cys-19 form the signal peptide. Residues Trp-20 to Ser-568 are Extracellular-facing. 7 N-linked (GlcNAc...) asparagine glycosylation sites follow: Asn-88, Asn-89, Asn-96, Asn-136, Asn-292, Asn-480, and Asn-530. A helical membrane pass occupies residues Leu-569–Phe-589. Topologically, residues Ala-590–Arg-604 are cytoplasmic. Residues Leu-605 to Gly-625 form a helical membrane-spanning segment. Residues Lys-626–Ser-640 lie on the Extracellular side of the membrane. A helical transmembrane segment spans residues Leu-641–Phe-661. The Cytoplasmic segment spans residues Lys-662–Gly-681. Residues Ile-682–Trp-702 form a helical membrane-spanning segment. Residues Thr-703–Asn-725 are Extracellular-facing. The helical transmembrane segment at Ser-726–Cys-746 threads the bilayer. Residues Ser-747 to Cys-762 lie on the Cytoplasmic side of the membrane. The chain crosses the membrane as a helical span at residues Val-763–Ile-783. At Tyr-784–Leu-789 the chain is on the extracellular side. Residues Pro-790–Leu-810 traverse the membrane as a helical segment. Residues Pro-811–Thr-842 lie on the Cytoplasmic side of the membrane.

Belongs to the G-protein coupled receptor 3 family. TAS1R subfamily. In terms of assembly, forms heterodimers with TAS1R3. Expressed strongly only in fungiform papillae.

It localises to the cell membrane. In terms of biological role, putative taste receptor. TAS1R1/TAS1R3 responds to the umami taste stimulus (the taste of monosodium glutamate) and also to most of the 20 standard L-amino acids, but not to their D-enantiomers or other compounds. Sequence differences within and between species can significantly influence the selectivity and specificity of taste responses. In Mus musculus (Mouse), this protein is Taste receptor type 1 member 1 (Tas1r1).